The sequence spans 211 residues: Endonuclease V (211 aa).

Residues Asp31 and Glu95 each contribute to the Mg(2+) site. The disordered stretch occupies residues 182–211; that stretch reads IYEVKNTPSPNRSRKKRGNRGKDNNNSQGN.

Belongs to the endonuclease V family. Mg(2+) serves as cofactor.

It localises to the cytoplasm. The enzyme catalyses Endonucleolytic cleavage at apurinic or apyrimidinic sites to products with a 5'-phosphate.. Functionally, DNA repair enzyme involved in the repair of deaminated bases. Selectively cleaves double-stranded DNA at the second phosphodiester bond 3' to a deoxyinosine leaving behind the intact lesion on the nicked DNA. In Pyrococcus horikoshii (strain ATCC 700860 / DSM 12428 / JCM 9974 / NBRC 100139 / OT-3), this protein is Endonuclease V.